We begin with the raw amino-acid sequence, 445 residues long: Phosphoglucosamine mutase (445 aa).

Serine 99 (phosphoserine intermediate) is an active-site residue. Mg(2+) is bound by residues serine 99, aspartate 242, aspartate 244, and aspartate 246. Phosphoserine is present on serine 99.

It belongs to the phosphohexose mutase family. Requires Mg(2+) as cofactor. Activated by phosphorylation.

It catalyses the reaction alpha-D-glucosamine 1-phosphate = D-glucosamine 6-phosphate. Functionally, catalyzes the conversion of glucosamine-6-phosphate to glucosamine-1-phosphate. This chain is Phosphoglucosamine mutase, found in Nitratiruptor sp. (strain SB155-2).